A 131-amino-acid chain; its full sequence is CDGSH iron-sulfur domain-containing protein 2 homolog A (131 aa).

Over 1–35 the chain is Lumenal; it reads MEFLSKIVRVHIPDYLNSVPVPDSFGGFLDLTAGQ. Residues 36-58 traverse the membrane as a helical segment; sequence WLHLFAFSGTVAAAVYMSVKPYL. The Cytoplasmic segment spans residues 59-131; the sequence is DKKDQKDQLV…GPLVLKRKDV (73 aa). [2Fe-2S] cluster contacts are provided by Cys95, Cys97, Cys106, and His110.

This sequence belongs to the CISD protein family. CISD2 subfamily. The cofactor is [2Fe-2S] cluster.

It is found in the endoplasmic reticulum membrane. The polypeptide is CDGSH iron-sulfur domain-containing protein 2 homolog A (Branchiostoma floridae (Florida lancelet)).